Consider the following 50-residue polypeptide: U-megalopygitoxin(9)-Mo13 (50 aa).

The N-terminal stretch at 1 to 23 (MKLVFLFFIVAVMVSLFVGMTEA) is a signal peptide. Residues C33 and C40 are joined by a disulfide bond.

The protein belongs to the caterpillar 9 family. Expressed by the venom apparatus.

The protein resides in the secreted. Functionally, probable toxin. This Megalopyge opercularis (Southern flannel moth) protein is U-megalopygitoxin(9)-Mo13.